A 171-amino-acid chain; its full sequence is Phosphopantetheine adenylyltransferase (171 aa).

Threonine 9 provides a ligand contact to substrate. ATP-binding positions include 9-10 (TF) and histidine 17. 3 residues coordinate substrate: lysine 41, leucine 78, and arginine 92. ATP contacts are provided by residues 93-95 (GLR), glutamate 103, and 128-134 (HQAIASK).

Belongs to the bacterial CoaD family. As to quaternary structure, homohexamer. It depends on Mg(2+) as a cofactor.

It is found in the cytoplasm. The catalysed reaction is (R)-4'-phosphopantetheine + ATP + H(+) = 3'-dephospho-CoA + diphosphate. Its pathway is cofactor biosynthesis; coenzyme A biosynthesis; CoA from (R)-pantothenate: step 4/5. Reversibly transfers an adenylyl group from ATP to 4'-phosphopantetheine, yielding dephospho-CoA (dPCoA) and pyrophosphate. This Dinoroseobacter shibae (strain DSM 16493 / NCIMB 14021 / DFL 12) protein is Phosphopantetheine adenylyltransferase.